We begin with the raw amino-acid sequence, 489 residues long: Protein K15 (489 aa).

A signal peptide spans methionine 1 to cysteine 26. 11 helical membrane passes run threonine 29–isoleucine 49, tryptophan 63–serine 83, threonine 89–isoleucine 109, histidine 121–serine 141, tryptophan 148–valine 168, leucine 175–cysteine 195, cysteine 200–isoleucine 220, phenylalanine 237–isoleucine 257, isoleucine 264–tryptophan 284, methionine 296–leucine 316, and isoleucine 324–phenylalanine 344.

Interacts with host LYN; this interaction modulates B-cells signaling. Interacts with host ITSN2.

The protein localises to the host cell membrane. It is found in the host Golgi apparatus. It localises to the host trans-Golgi network. In terms of biological role, plays a crucial role for reactivation of the virus from latency, early viral gene expression and virus production. Modulates host signaling pathways including activation of MAP kinases c-JUN-N-terminal kinase (JNK), ERK2, and NF-kappa-B resulting in the activation of AP-1 and NFAT-dependent gene expression in B-lymphocytes. When expressed in epithelial cells, induces the expression of several inflammatory and angiogenic genes. Also interferes with B-lymphocytes signaling through interaction with host LYN kinase. The protein is Protein K15 (K15) of Human herpesvirus 8 type P (isolate GK18) (HHV-8).